We begin with the raw amino-acid sequence, 246 residues long: tRNA (guanine-N(1)-)-methyltransferase (246 aa).

S-adenosyl-L-methionine contacts are provided by residues glycine 117 and 137-142 (IGDYVL).

It belongs to the RNA methyltransferase TrmD family. Homodimer.

The protein resides in the cytoplasm. It carries out the reaction guanosine(37) in tRNA + S-adenosyl-L-methionine = N(1)-methylguanosine(37) in tRNA + S-adenosyl-L-homocysteine + H(+). Its function is as follows. Specifically methylates guanosine-37 in various tRNAs. The chain is tRNA (guanine-N(1)-)-methyltransferase from Acinetobacter baumannii (strain AB307-0294).